The following is a 270-amino-acid chain: Formamidopyrimidine-DNA glycosylase (270 aa).

Residue Pro2 is the Schiff-base intermediate with DNA of the active site. Glu3 (proton donor) is an active-site residue. Lys58 serves as the catalytic Proton donor; for beta-elimination activity. His90, Arg109, and Arg152 together coordinate DNA. The segment at 237–270 (RVYGREGEACECGGAIVRVVQSGRSTFYCRKCQR) adopts an FPG-type zinc-finger fold. Arg260 (proton donor; for delta-elimination activity) is an active-site residue.

Belongs to the FPG family. In terms of assembly, monomer. Zn(2+) is required as a cofactor.

The catalysed reaction is Hydrolysis of DNA containing ring-opened 7-methylguanine residues, releasing 2,6-diamino-4-hydroxy-5-(N-methyl)formamidopyrimidine.. It carries out the reaction 2'-deoxyribonucleotide-(2'-deoxyribose 5'-phosphate)-2'-deoxyribonucleotide-DNA = a 3'-end 2'-deoxyribonucleotide-(2,3-dehydro-2,3-deoxyribose 5'-phosphate)-DNA + a 5'-end 5'-phospho-2'-deoxyribonucleoside-DNA + H(+). Functionally, involved in base excision repair of DNA damaged by oxidation or by mutagenic agents. Acts as a DNA glycosylase that recognizes and removes damaged bases. Has a preference for oxidized purines, such as 7,8-dihydro-8-oxoguanine (8-oxoG). Has AP (apurinic/apyrimidinic) lyase activity and introduces nicks in the DNA strand. Cleaves the DNA backbone by beta-delta elimination to generate a single-strand break at the site of the removed base with both 3'- and 5'-phosphates. In Sphingopyxis alaskensis (strain DSM 13593 / LMG 18877 / RB2256) (Sphingomonas alaskensis), this protein is Formamidopyrimidine-DNA glycosylase.